Here is a 133-residue protein sequence, read N- to C-terminus: Salivary cystatin-L2 (133 aa).

The signal sequence occupies residues Met-1–Ala-18. The Cystatin domain occupies Asp-34 to Asn-118.

The protein belongs to the cystatin family. As to expression, salivary gland, midgut and other tissues.

It is found in the secreted. Functionally, inhibitor of cysteine proteinases. Inhibits host cathepsin L (CTSL) and S (CTSS). Modulates production of various cytokines and chemokines in lipopolysaccharide (LPS)-stimulated mouse dendritic cell. Suppresses maturation of mouse bone-marrow-derived dendritic cells (BMDCs). In terms of biological role, (Microbial infection) Modulates Borrelia miyamotoi-stimulated immune responses in mice by suppressing activities of host dendritic and T-cells. This chain is Salivary cystatin-L2, found in Ixodes persulcatus (Taiga tick).